The following is a 439-amino-acid chain: Ribosomal protein uS12 methylthiotransferase RimO (439 aa).

The MTTase N-terminal domain maps to 3-115 (KKLHLISLGC…IDQMVRERQG (113 aa)). [4Fe-4S] cluster-binding residues include Cys12, Cys46, Cys78, Cys147, Cys151, and Cys154. Positions 133–362 (TGSSVHAYVK…DKIIQKQHRA (230 aa)) constitute a Radical SAM core domain.

Belongs to the methylthiotransferase family. RimO subfamily. It depends on [4Fe-4S] cluster as a cofactor.

It localises to the cytoplasm. It catalyses the reaction L-aspartate(89)-[ribosomal protein uS12]-hydrogen + (sulfur carrier)-SH + AH2 + 2 S-adenosyl-L-methionine = 3-methylsulfanyl-L-aspartate(89)-[ribosomal protein uS12]-hydrogen + (sulfur carrier)-H + 5'-deoxyadenosine + L-methionine + A + S-adenosyl-L-homocysteine + 2 H(+). In terms of biological role, catalyzes the methylthiolation of an aspartic acid residue of ribosomal protein uS12. The polypeptide is Ribosomal protein uS12 methylthiotransferase RimO (Wolinella succinogenes (strain ATCC 29543 / DSM 1740 / CCUG 13145 / JCM 31913 / LMG 7466 / NCTC 11488 / FDC 602W) (Vibrio succinogenes)).